The primary structure comprises 399 residues: Succinate--CoA ligase [ADP-forming] subunit beta (399 aa).

The ATP-grasp domain occupies 9-254 (KELLAKFGVA…ETEEDPAEIE (246 aa)). Residues Lys-46, 53 to 55 (GRG), Ala-112, and Glu-117 contribute to the ATP site. Mg(2+)-binding residues include Asn-209 and Asp-223. Substrate contacts are provided by residues Asn-274 and 331-333 (GIM).

Belongs to the succinate/malate CoA ligase beta subunit family. In terms of assembly, heterotetramer of two alpha and two beta subunits. The cofactor is Mg(2+).

It carries out the reaction succinate + ATP + CoA = succinyl-CoA + ADP + phosphate. The enzyme catalyses GTP + succinate + CoA = succinyl-CoA + GDP + phosphate. The protein operates within carbohydrate metabolism; tricarboxylic acid cycle; succinate from succinyl-CoA (ligase route): step 1/1. Succinyl-CoA synthetase functions in the citric acid cycle (TCA), coupling the hydrolysis of succinyl-CoA to the synthesis of either ATP or GTP and thus represents the only step of substrate-level phosphorylation in the TCA. The beta subunit provides nucleotide specificity of the enzyme and binds the substrate succinate, while the binding sites for coenzyme A and phosphate are found in the alpha subunit. The chain is Succinate--CoA ligase [ADP-forming] subunit beta from Rhizorhabdus wittichii (strain DSM 6014 / CCUG 31198 / JCM 15750 / NBRC 105917 / EY 4224 / RW1) (Sphingomonas wittichii).